The primary structure comprises 426 residues: Enolase (426 aa).

Position 165 (Q165) interacts with (2R)-2-phosphoglycerate. Residue E209 is the Proton donor of the active site. Residues D244, E287, and D313 each coordinate Mg(2+). Residues K338, R367, S368, and K389 each coordinate (2R)-2-phosphoglycerate. The active-site Proton acceptor is the K338.

It belongs to the enolase family. Requires Mg(2+) as cofactor.

The protein localises to the cytoplasm. It is found in the secreted. It localises to the cell surface. The catalysed reaction is (2R)-2-phosphoglycerate = phosphoenolpyruvate + H2O. It participates in carbohydrate degradation; glycolysis; pyruvate from D-glyceraldehyde 3-phosphate: step 4/5. Functionally, catalyzes the reversible conversion of 2-phosphoglycerate (2-PG) into phosphoenolpyruvate (PEP). It is essential for the degradation of carbohydrates via glycolysis. This is Enolase from Methanococcus maripaludis (strain C7 / ATCC BAA-1331).